The following is a 140-amino-acid chain: Large-conductance mechanosensitive channel (140 aa).

2 consecutive transmembrane segments (helical) span residues 9 to 29 and 86 to 106; these read AFAL…GAAF and GSFL…FLMV.

The protein belongs to the MscL family. As to quaternary structure, homopentamer.

Its subcellular location is the cell inner membrane. Its function is as follows. Channel that opens in response to stretch forces in the membrane lipid bilayer. May participate in the regulation of osmotic pressure changes within the cell. This Anaeromyxobacter dehalogenans (strain 2CP-1 / ATCC BAA-258) protein is Large-conductance mechanosensitive channel.